We begin with the raw amino-acid sequence, 111 residues long: Large ribosomal subunit protein P1 (111 aa).

The interval A75–F111 is disordered. Acidic residues predominate over residues K88–D101.

Belongs to the eukaryotic ribosomal protein P1/P2 family. Part of the 50S ribosomal subunit. Homodimer, it forms part of the ribosomal stalk which helps the ribosome interact with GTP-bound translation factors. Forms a heptameric uL10/P0(P1)2(P1)2(P1)2 complex, where uL10/P0 forms an elongated spine to which the P1 dimers bind in a sequential fashion.

Its function is as follows. Forms part of the ribosomal stalk, playing a central role in the interaction of the ribosome with GTP-bound translation factors. The protein is Large ribosomal subunit protein P1 of Aeropyrum pernix (strain ATCC 700893 / DSM 11879 / JCM 9820 / NBRC 100138 / K1).